Here is a 162-residue protein sequence, read N- to C-terminus: Disulfide bond formation protein B (162 aa).

At M1–I4 the chain is on the cytoplasmic side. The chain crosses the membrane as a helical span at residues F5–Y21. At L22–I39 the chain is on the periplasmic side. A disulfide bridge links C31 with C34. A helical membrane pass occupies residues A40–P56. Topologically, residues Q57 to H62 are cytoplasmic. The chain crosses the membrane as a helical span at residues I63–G80. Topologically, residues R81–D136 are periplasmic. The cysteines at positions 94 and 122 are disulfide-linked. Residues W137–K155 form a helical membrane-spanning segment. Residues K156–Q162 are Cytoplasmic-facing.

This sequence belongs to the DsbB family.

The protein resides in the cell inner membrane. Required for disulfide bond formation in some periplasmic proteins. Acts by oxidizing the DsbA protein. This is Disulfide bond formation protein B from Nitrosomonas eutropha (strain DSM 101675 / C91 / Nm57).